The sequence spans 220 residues: NADH-quinone oxidoreductase subunit I (220 aa).

4Fe-4S ferredoxin-type domains follow at residues 71 to 102 and 112 to 141; these read LQRLLDSGSERCIGCGLCEKICTSNCIRIITH and DSYTINLGRCIYCGLCAEVCPELAIVMGNR. Positions 82, 85, 88, 92, 121, 124, 127, and 131 each coordinate [4Fe-4S] cluster. Residues 187–220 are disordered; it reads MQATPLDYVQEPSKEESQEETPTNPESNKGDENV.

Belongs to the complex I 23 kDa subunit family. As to quaternary structure, NDH-1 is composed of 14 different subunits. Subunits NuoA, H, J, K, L, M, N constitute the membrane sector of the complex. Requires [4Fe-4S] cluster as cofactor.

The protein localises to the cell inner membrane. The enzyme catalyses a quinone + NADH + 5 H(+)(in) = a quinol + NAD(+) + 4 H(+)(out). NDH-1 shuttles electrons from NADH, via FMN and iron-sulfur (Fe-S) centers, to quinones in the respiratory chain. The immediate electron acceptor for the enzyme in this species is believed to be ubiquinone. Couples the redox reaction to proton translocation (for every two electrons transferred, four hydrogen ions are translocated across the cytoplasmic membrane), and thus conserves the redox energy in a proton gradient. The polypeptide is NADH-quinone oxidoreductase subunit I (Helicobacter pylori (strain ATCC 700392 / 26695) (Campylobacter pylori)).